Here is a 385-residue protein sequence, read N- to C-terminus: 1-deoxy-D-xylulose 5-phosphate reductoisomerase (385 aa).

NADPH contacts are provided by Thr10, Gly11, Ser12, Ile13, and Asn124. Lys125 lines the 1-deoxy-D-xylulose 5-phosphate pocket. NADPH is bound at residue Glu126. Asp150 contributes to the Mn(2+) binding site. The 1-deoxy-D-xylulose 5-phosphate site is built by Ser151, Glu152, Ser176, and His199. Glu152 contacts Mn(2+). Gly205 contributes to the NADPH binding site. 1-deoxy-D-xylulose 5-phosphate is bound by residues Ser212, Asn217, Lys218, and Glu221. Glu221 contributes to the Mn(2+) binding site.

It belongs to the DXR family. The cofactor is Mg(2+). Requires Mn(2+) as cofactor.

The catalysed reaction is 2-C-methyl-D-erythritol 4-phosphate + NADP(+) = 1-deoxy-D-xylulose 5-phosphate + NADPH + H(+). It participates in isoprenoid biosynthesis; isopentenyl diphosphate biosynthesis via DXP pathway; isopentenyl diphosphate from 1-deoxy-D-xylulose 5-phosphate: step 1/6. Catalyzes the NADPH-dependent rearrangement and reduction of 1-deoxy-D-xylulose-5-phosphate (DXP) to 2-C-methyl-D-erythritol 4-phosphate (MEP). This Clostridium kluyveri (strain NBRC 12016) protein is 1-deoxy-D-xylulose 5-phosphate reductoisomerase.